The sequence spans 523 residues: MILDAAIVALADLPGTWELIVPNAGIASMHTAVTRYGTVVLLDRTNIGPSRKMLPKGHCRYDPKDEVLKRDCYAHSVILDLNTNKIRPLKILTDTWCSSGQFLPDGSLLQTGGDLDGVKKIRKFVPCGPHGFCDWEELKDVELETGRWYATNQILPDGSVIIVGGRAANSVEYYPPRKGGAVQLPFLSDVEDKQMDNLYPYVHLLPNGHLFIFANNKAVMYDYTSNKVMLEYPPLDGGPRNYPSAGSSVMLALEGDYSMAIIVVCGGAQFGAFIQKSTDTPAHGSCGRIVATSPHPVWEMEDMPFGRIMGDMVMLPTGDVLIINGAQAGSQGFELASSPCFFPLLYRPNQPLGLRFMTLTPGTVPRMYHSTANLLPDGRVLIAGSNPHYFYKFAAEFPTELRIEAFSPEYLFADKANIRPVIDESPEMVRFGEQFDVFVSVSLPVVGSMEVNLASAPFATHSFSQGQRLVKLTVSPTVPDADERYRIVCTAPPGGKIAPPGYYMMFAVNLGVPSVARWVQLVP.

The first 19 residues, 1-19, serve as a signal peptide directing secretion; that stretch reads MILDAAIVALADLPGTWEL.

The protein localises to the secreted. It is found in the cell wall. It catalyses the reaction an aldehyde + O2 + H2O = a carboxylate + H2O2 + H(+). Its function is as follows. Catalyzes the oxidation of aldehydes to the corresponding carboxylate by coupling the reaction to the reduction of dioxygen to hydrogen peroxide. Substrates include glyoxal and other aldehydes. Involved in disease resistance against the grapevine powdery mildew E.necator. Is sufficient to confer disease resistance to E.necator. Can produce hydrogen peroxide in response to E.necator infection, and this may directly play a role in the defense mechanism during plant-pathogen interactions. The protein is Aldehyde oxidase GLOX of Vitis pseudoreticulata (Chinese wild grapevine).